The sequence spans 341 residues: Anthranilate phosphoribosyltransferase (341 aa).

5-phospho-alpha-D-ribose 1-diphosphate contacts are provided by residues Gly-79, 82-83 (GD), Thr-87, 89-92 (NIST), 107-115 (KHGGRSVSS), and Ser-119. Gly-79 contacts anthranilate. Mg(2+) is bound at residue Ser-91. Anthranilate is bound at residue Arg-165. Residues Asp-224 and Glu-225 each coordinate Mg(2+).

It belongs to the anthranilate phosphoribosyltransferase family. In terms of assembly, homodimer. Mg(2+) serves as cofactor.

The catalysed reaction is N-(5-phospho-beta-D-ribosyl)anthranilate + diphosphate = 5-phospho-alpha-D-ribose 1-diphosphate + anthranilate. The protein operates within amino-acid biosynthesis; L-tryptophan biosynthesis; L-tryptophan from chorismate: step 2/5. Its function is as follows. Catalyzes the transfer of the phosphoribosyl group of 5-phosphorylribose-1-pyrophosphate (PRPP) to anthranilate to yield N-(5'-phosphoribosyl)-anthranilate (PRA). The polypeptide is Anthranilate phosphoribosyltransferase (Ruminiclostridium cellulolyticum (strain ATCC 35319 / DSM 5812 / JCM 6584 / H10) (Clostridium cellulolyticum)).